We begin with the raw amino-acid sequence, 249 residues long: Methylthioribulose-1-phosphate dehydratase (249 aa).

2 residues coordinate Zn(2+): H103 and H105.

Belongs to the aldolase class II family. MtnB subfamily. Requires Zn(2+) as cofactor.

The enzyme catalyses 5-(methylsulfanyl)-D-ribulose 1-phosphate = 5-methylsulfanyl-2,3-dioxopentyl phosphate + H2O. It participates in amino-acid biosynthesis; L-methionine biosynthesis via salvage pathway; L-methionine from S-methyl-5-thio-alpha-D-ribose 1-phosphate: step 2/6. Functionally, catalyzes the dehydration of methylthioribulose-1-phosphate (MTRu-1-P) into 2,3-diketo-5-methylthiopentyl-1-phosphate (DK-MTP-1-P). The sequence is that of Methylthioribulose-1-phosphate dehydratase from Leptospira interrogans serogroup Icterohaemorrhagiae serovar Lai (strain 56601).